We begin with the raw amino-acid sequence, 555 residues long: Connector enhancer of kinase suppressor of ras 3 (555 aa).

In terms of domain architecture, SAM spans 7–72 (WSPKQVVDWT…LEAVDLLCAL (66 aa)). In terms of domain architecture, CRIC spans 80 to 174 (NMKNLVLKLR…TAVQKDCLVA (95 aa)). The PDZ domain maps to 211–293 (EVHLPNVRPG…GVVLLLKKRP (83 aa)). Disordered stretches follow at residues 308–333 (RWKPPLVQTSPPPTTTQSPESTMDAS), 348–391 (PPPA…LDQE), and 518–538 (PFQEEGPKKKSASSSAKASSG). Low complexity predominate over residues 311–329 (PPLVQTSPPPTTTQSPEST). Positions 325–546 (SPESTMDASL…SGEPSLLVSW (222 aa)) constitute a DUF1170 domain. 2 positions are modified to phosphoserine: Ser381 and Ser383.

The protein belongs to the CNKSR family. As to quaternary structure, interacts with epithelial sodium channel ENaC. Interacts directly with SCNN1A (ENaC subunit alpha) and SCNN1B (ENaC subunit beta) C-terminal tails. Interacts with ENaC regulatory proteins NEDD4L, RAF1 and SGK1.

It localises to the cytoplasm. The protein localises to the apical cell membrane. Its function is as follows. Involved in transepithelial sodium transport. Regulates aldosterone-induced and epithelial sodium channel (ENaC)-mediated sodium transport through regulation of ENaC cell surface expression. Acts as a scaffold protein coordinating the assembly of an ENaC-regulatory complex (ERC). This Rattus norvegicus (Rat) protein is Connector enhancer of kinase suppressor of ras 3 (Cnksr3).